Here is a 455-residue protein sequence, read N- to C-terminus: F-box/LRR-repeat protein At5g35995 (455 aa).

Residues 4 to 51 (RDFISSLPDEVLGKKILSLLPTKLVVSTSVLSKRWRNLFHFVDSFDLE) form the F-box domain. 5 LRR repeats span residues 114 to 138 (DHYL…SYRT), 152 to 176 (FPAL…LISG), 282 to 305 (IRNV…CYTM), 308 to 324 (FDKL…ENGW), and 325 to 348 (QALP…LLHK).

This chain is F-box/LRR-repeat protein At5g35995, found in Arabidopsis thaliana (Mouse-ear cress).